The following is a 238-amino-acid chain: Ribosomal RNA small subunit methyltransferase G (238 aa).

S-adenosyl-L-methionine contacts are provided by residues G79, F84, 102–104 (EAT), 130–131 (IE), and R149.

Belongs to the methyltransferase superfamily. RNA methyltransferase RsmG family.

The protein resides in the cytoplasm. Functionally, specifically methylates the N7 position of a guanine in 16S rRNA. This is Ribosomal RNA small subunit methyltransferase G from Chloroflexus aggregans (strain MD-66 / DSM 9485).